Consider the following 484-residue polypeptide: Gasdermin-D (484 aa).

Tyr37 is modified (phosphotyrosine). The residue at position 56 (Cys56) is an S-(2-succinyl)cysteine. Beta stranded transmembrane passes span 91-97 and 103-108; these read QGSVELA and KIAGGA. A Phosphotyrosine modification is found at Tyr158. Transmembrane regions (beta stranded) follow at residues 180–186 and 191–197; these read GSGRFSL and CLQGEGQ. Ser185 is modified (phosphoserine). Cys191 and Cys268 each carry S-(2-succinyl)cysteine. Cys191 carries S-palmitoyl cysteine lipidation. The linker helix loop stretch occupies residues 277-296; the sequence is VPAEGAFTEDFQGLRAEVET. Cys309 is modified (S-(2-succinyl)cysteine). O-linked (GlcNAc) serine glycosylation occurs at Ser338. Cys467 carries the S-(2-succinyl)cysteine modification.

The protein belongs to the gasdermin family. Homooligomer; homooligomeric ring-shaped pore complex containing 27-28 subunits when inserted in the membrane. Homooligomerization is promoted by the mTORC1 complex in macrophages. In response to a canonical inflammasome stimulus, such as nigericin, recruited to NLRP3 inflammasone with similar kinetics to that of uncleaved CASP1 precursor. Although this recruitment is also observed in the absence of PYCARD, it is more efficient in its presence. In terms of processing, cleavage at Asp-275 by CASP1 (mature and uncleaved precursor forms), CASP4, CASP5 or CASP8 relieves autoinhibition and is sufficient to initiate pyroptosis. Cleavage by CASP1 and CASP4 is not strictly dependent on the consensus cleavage site on GSDMD but depends on an exosite interface on CASP1 that recognizes and binds the Gasdermin-D, C-terminal (GSDMD-CT) part. Cleavage by CASP8 takes place following inactivation of MAP3K7/TAK1 by Yersinia toxin YopJ. Cleavage at Asp-87 by CASP3 or CASP7 inactivates the ability to mediate pyroptosis, but generates the Gasdermin-D, p13 chain, which translocates to the nucleus and acts as a transcription regulator. Cleavage by papain allergen generates the Gasdermin-D, p40 chain. Palmitoylated at Cys-191 by ZDHHC5 and ZDHHC9 in response to microbial infection and danger signals. Palmitoylation takes place before cleavage by caspases (CASP1, CASP4, CASP5 or CASP8) and is required for membrane translocation and pore formation. Depalmitoylated by LYPLA2. Post-translationally, succination of Cys-191 by the Krebs cycle intermediate fumarate, which leads to S-(2-succinyl)cysteine residues, inhibits processing by caspases, and ability to initiate pyroptosis. Succination modification is catalyzed by a non-enzymatic reaction caused by an accumulation of fumarate. In terms of processing, glycosylated: O-GlcNAcylation by OGT leads to reduced cleavage by CASP4 and decreased LPS-induced endothelial cell pyroptosis. (Microbial infection) Cleaved and inactivated by Protease 3C from Human enterovirus 71 (EV71), preventing GSDMD-mediated pyroptosis. Post-translationally, (Microbial infection) Cleaved and inactivated by the 3C-like proteinase nsp5 from human coronavirus SARS-CoV-2, preventing GSDMD-mediated pyroptosis. In terms of processing, (Microbial infection) Ubiquitinated by S.flexneri IpaH7.8, leading to its degradation by the proteasome. As to expression, expressed in the suprabasal cells of esophagus, as well as in the isthmus/neck, pit, and gland of the stomach, suggesting preferential expression in differentiating cells.

The protein localises to the cytoplasm. It is found in the cytosol. The protein resides in the inflammasome. It localises to the cell membrane. Its subcellular location is the secreted. The protein localises to the mitochondrion membrane. It is found in the nucleus. The full-length protein before cleavage is inactive: intramolecular interactions between N- and C-terminal domains mediate autoinhibition in the absence of activation signal. The intrinsic pyroptosis-inducing activity is carried by the released N-terminal moiety (Gasdermin-D, N-terminal) following cleavage by caspases CASP1, CASP4, CASP5 or CASP8. Cleavage at Asp-87 by CASP3 or CASP7 inactivates the ability to mediate pyroptosis. Homooligomerization and pore formation is specifically inhibited by VHH(GSDMD-1) and, to a lesser extent, VHH(GSDMD-2) nanobodies, protecting against excessive pyroptosis. Inhibited by small molecule NU6300, which covalently reacts with Cys-191, thereby preventing palmitoylation and pyroptosis. Precursor of a pore-forming protein that plays a key role in host defense against pathogen infection and danger signals. This form constitutes the precursor of the pore-forming protein: upon cleavage, the released N-terminal moiety (Gasdermin-D, N-terminal) binds to membranes and forms pores, triggering pyroptosis. Functionally, promotes pyroptosis in response to microbial infection and danger signals. Produced by the cleavage of gasdermin-D by inflammatory caspases CASP1, CASP4 or CASP5 in response to canonical, as well as non-canonical (such as cytosolic LPS) inflammasome activators. After cleavage, moves to the plasma membrane where it strongly binds to inner leaflet lipids, including monophosphorylated phosphatidylinositols, such as phosphatidylinositol 4-phosphate, bisphosphorylated phosphatidylinositols, such as phosphatidylinositol (4,5)-bisphosphate, as well as phosphatidylinositol (3,4,5)-bisphosphate, and more weakly to phosphatidic acid and phosphatidylserine. Homooligomerizes within the membrane and forms pores of 10-15 nanometers (nm) of inner diameter, allowing the release of mature interleukin-1 (IL1B and IL18) and triggering pyroptosis. Gasdermin pores also allow the release of mature caspase-7 (CASP7). In some, but not all, cells types, pyroptosis is followed by pyroptotic cell death, which is caused by downstream activation of ninjurin-1 (NINJ1), which mediates membrane rupture (cytolysis). Also forms pores in the mitochondrial membrane, resulting in release of mitochondrial DNA (mtDNA) into the cytosol. Gasdermin-D, N-terminal released from pyroptotic cells into the extracellular milieu rapidly binds to and kills both Gram-negative and Gram-positive bacteria, without harming neighboring mammalian cells, as it does not disrupt the plasma membrane from the outside due to lipid-binding specificity. Under cell culture conditions, also active against intracellular bacteria, such as Listeria monocytogenes. Also active in response to MAP3K7/TAK1 inactivation by Yersinia toxin YopJ, which triggers cleavage by CASP8 and subsequent activation. Required for mucosal tissue defense against enteric pathogens. Activation of the non-canonical inflammasome in brain endothelial cells can lead to excessive pyroptosis, leading to blood-brain barrier breakdown. Strongly binds to bacterial and mitochondrial lipids, including cardiolipin. Does not bind to unphosphorylated phosphatidylinositol, phosphatidylethanolamine nor phosphatidylcholine. Its function is as follows. Transcription coactivator produced by the cleavage by CASP3 or CASP7 in the upper small intestine in response to dietary antigens. Required to maintain food tolerance in small intestine: translocates to the nucleus and acts as a coactivator for STAT1 to induce the transcription of CIITA and MHC class II molecules, which in turn induce type 1 regulatory T (Tr1) cells in upper small intestine. In terms of biological role, produced by the cleavage by papain allergen. After cleavage, moves to the plasma membrane and homooligomerizes within the membrane and forms pores of 10-15 nanometers (nm) of inner diameter, allowing the specific release of mature interleukin-33 (IL33), promoting type 2 inflammatory immune response. The polypeptide is Gasdermin-D (Homo sapiens (Human)).